Here is a 532-residue protein sequence, read N- to C-terminus: Phosphoenolpyruvate carboxykinase (ATP) (532 aa).

The substrate site is built by R60, Y194, and K200. ATP-binding positions include K200, H219, and 237–245; that span reads GLSGTGKTT. Mn(2+) contacts are provided by K200 and H219. D258 provides a ligand contact to Mn(2+). E286, R324, and T449 together coordinate ATP. A substrate-binding site is contributed by R324.

Belongs to the phosphoenolpyruvate carboxykinase (ATP) family. It depends on Mn(2+) as a cofactor.

Its subcellular location is the cytoplasm. The enzyme catalyses oxaloacetate + ATP = phosphoenolpyruvate + ADP + CO2. Its pathway is carbohydrate biosynthesis; gluconeogenesis. Its function is as follows. Involved in the gluconeogenesis. Catalyzes the conversion of oxaloacetate (OAA) to phosphoenolpyruvate (PEP) through direct phosphoryl transfer between the nucleoside triphosphate and OAA. In Cereibacter sphaeroides (strain ATCC 17025 / ATH 2.4.3) (Rhodobacter sphaeroides), this protein is Phosphoenolpyruvate carboxykinase (ATP).